The sequence spans 349 residues: Aspartate carbamoyltransferase catalytic subunit (349 aa).

Residues Arg59 and Thr60 each coordinate carbamoyl phosphate. Position 87 (Lys87) interacts with L-aspartate. 3 residues coordinate carbamoyl phosphate: Arg109, His142, and Gln145. Arg182 and Arg253 together coordinate L-aspartate. Residues Gly294 and Pro295 each contribute to the carbamoyl phosphate site.

Belongs to the aspartate/ornithine carbamoyltransferase superfamily. ATCase family. As to quaternary structure, heterododecamer (2C3:3R2) of six catalytic PyrB chains organized as two trimers (C3), and six regulatory PyrI chains organized as three dimers (R2).

It carries out the reaction carbamoyl phosphate + L-aspartate = N-carbamoyl-L-aspartate + phosphate + H(+). Its pathway is pyrimidine metabolism; UMP biosynthesis via de novo pathway; (S)-dihydroorotate from bicarbonate: step 2/3. Catalyzes the condensation of carbamoyl phosphate and aspartate to form carbamoyl aspartate and inorganic phosphate, the committed step in the de novo pyrimidine nucleotide biosynthesis pathway. This chain is Aspartate carbamoyltransferase catalytic subunit, found in Synechococcus sp. (strain CC9902).